The primary structure comprises 1063 residues: E3 ubiquitin-protein ligase PDZRN3 (1063 aa).

An RING-type; degenerate zinc finger spans residues 18–56; sequence CALCHKVLEDPLTTPCGHVFCAGCVLPWVVQEGSCPARC. Residues 100-158 form a TRAF-type zinc finger; the sequence is EHLERCDFAPARCRHAGCGQLLLRRDVEAHMRDACDARPVGRCQEGCGLPLTHGEQRAG. 2 PDZ domains span residues 249-339 and 419-503; these read TLVL…LRRT and EVGL…IARP. Residue S427 is modified to Phosphoserine. The interval 545-602 is disordered; that stretch reads QKKHEEDGGTTDTATILSNQHEKDSGVGRTDESTRNDESSEQENNGEDATASANPLAG. Positions 554–563 are enriched in polar residues; that stretch reads TTDTATILSN. Residues 564 to 582 show a composition bias toward basic and acidic residues; that stretch reads QHEKDSGVGRTDESTRNDE. Residues 680 to 705 are a coiled coil; sequence ESVDKELELLNEELRSIELECLSIVR. The span at 746–755 shows a compositional bias: basic and acidic residues; it reads ELPEKSDKDS. Disordered stretches follow at residues 746-798 and 834-853; these read ELPE…IEAY and IKERRGSDGSRSPTASPKLG. The span at 756 to 770 shows a compositional bias: polar residues; that stretch reads SSAYNTGESCRSTPL.

As to quaternary structure, interacts with NLGN1 and EFNB2. Interacts with UBE2D2 and with MUSK via the first PDZ domain. In myotubes, the interaction between PDZRN3 and MUSK is enhanced upon agrin stimulation. In terms of processing, auto-ubiquitinated. As to expression, highly expressed in skeletal and cardiac muscle and at lower levels in spinal cord and brain (at protein level). Also expressed in kidney and lung. In muscles, concentrated at the neuromuscular junction (NMJ).

Its subcellular location is the synapse. It localises to the cytoplasm. It carries out the reaction S-ubiquitinyl-[E2 ubiquitin-conjugating enzyme]-L-cysteine + [acceptor protein]-L-lysine = [E2 ubiquitin-conjugating enzyme]-L-cysteine + N(6)-ubiquitinyl-[acceptor protein]-L-lysine.. It participates in protein modification; protein ubiquitination. E3 ubiquitin-protein ligase. Plays an important role in regulating the surface level of MUSK on myotubes. Mediates the ubiquitination of MUSK, promoting its endocytosis and lysosomal degradation. Might contribute to terminal myogenic differentiation. The sequence is that of E3 ubiquitin-protein ligase PDZRN3 (Pdzrn3) from Mus musculus (Mouse).